The following is a 542-amino-acid chain: Global nitrogen regulator NrpR (542 aa).

The tract at residues 12–77 (IEILDILSKS…VITERGLEEL (66 aa)) is winged helix-turn-helix. 2 NRD regions span residues 85–320 (RLGS…KANI) and 321–542 (RIKT…YKEI).

This sequence belongs to the NrpR family. In terms of assembly, homodimer.

Under nitrogen limitation, binding of the intracellular nitrogen metabolite 2-oxoglutarate to NrpR decreases the binding affinity of NrpR to DNA, leading to initiation of transcription. Functionally, transcriptional repressor of nitrogen fixation and assimilation genes. Binds to two tandem operators in the glnA and nif promoters, thereby blocking transcription of the genes. The chain is Global nitrogen regulator NrpR from Methanocaldococcus jannaschii (strain ATCC 43067 / DSM 2661 / JAL-1 / JCM 10045 / NBRC 100440) (Methanococcus jannaschii).